Consider the following 250-residue polypeptide: Replicating protein (250 aa).

Disordered stretches follow at residues 1 to 23 and 168 to 250; these read MFQQIGAVQAKSGTDEPAHPCEK and KAHM…KAFE. Composition is skewed to basic and acidic residues over residues 13–23 and 178–190; these read GTDEPAHPCEK and DRLRETVEDRTRA. Polar residues predominate over residues 218 to 237; that stretch reads SRCSFTTPNRPRRTLPSSHP.

Its function is as follows. Required for replication. It likely regulates pTAR copy number. This is Replicating protein (repA) from Rhizobium radiobacter (Agrobacterium tumefaciens).